The following is a 700-amino-acid chain: Neoverrucotoxin subunit beta (700 aa).

The 195-residue stretch at 506 to 700 folds into the B30.2/SPRY domain; sequence HMPGVETIKD…QKVNGQIKLL (195 aa).

Belongs to the SNTX/VTX toxin family. Heterodimer of alpha and beta subunits. Not glycosylated. Post-translationally, four intrachain disulfide linkages are present in the heterodimer. No interchain disulfide bound links the two subunits. As to expression, expressed by the venom gland.

The protein localises to the secreted. Has hemolytic and lethal activities. Its hemolytic activity is inhibited by anionic lipids, especially potently by cardiolipin. This is Neoverrucotoxin subunit beta from Synanceia verrucosa (Reef stonefish).